The chain runs to 218 residues: GTP cyclohydrolase 1 (218 aa).

The Zn(2+) site is built by Cys109, His112, and Cys180.

It belongs to the GTP cyclohydrolase I family. Toroid-shaped homodecamer, composed of two pentamers of five dimers.

It carries out the reaction GTP + H2O = 7,8-dihydroneopterin 3'-triphosphate + formate + H(+). The protein operates within cofactor biosynthesis; 7,8-dihydroneopterin triphosphate biosynthesis; 7,8-dihydroneopterin triphosphate from GTP: step 1/1. This chain is GTP cyclohydrolase 1, found in Haemophilus ducreyi (strain 35000HP / ATCC 700724).